The primary structure comprises 391 residues: GDP-mannose transporter (391 aa).

Residues 1-11 show a composition bias toward basic and acidic residues; that stretch reads MDDKKNEDVEM. Residues 1-28 form a disordered region; sequence MDDKKNEDVEMRNFNGRSSPSQRDPFIS. The Cytoplasmic portion of the chain corresponds to 1-44; sequence MDDKKNEDVEMRNFNGRSSPSQRDPFISKPGAAKRGGSSFDLSN. A helical membrane pass occupies residues 45-65; sequence VTNSPGISILAYCLASISMTV. At 66 to 75 the chain is on the lumenal side; it reads TNKYCVSGSN. Residues 76-96 traverse the membrane as a helical segment; it reads WNLNFFYLAIQSVVCIIAIII. Topologically, residues 97–115 are cytoplasmic; it reads CKQAGLITNLAPFDTKKAK. Residues 116 to 138 traverse the membrane as a helical segment; the sequence is TWFPISLLLVGMIYTSTKALQFL. The Lumenal portion of the chain corresponds to 139-141; sequence SVP. Residues 142 to 164 traverse the membrane as a helical segment; it reads VYTIFKNLTIIVIAYGEVLWFGG. Topologically, residues 165 to 170 are cytoplasmic; it reads SVTPSA. A helical membrane pass occupies residues 171–193; that stretch reads LFSFGLMVLSSVVAAWADIQHAL. Topologically, residues 194–209 are lumenal; that stretch reads YGGGATQTKEAADALS. Residues 210–230 traverse the membrane as a helical segment; it reads TLNAGYAWMGMNVFCTAAYVL. Over 231–245 the chain is Cytoplasmic; it reads SMRKVIKKMNFKDWD. The helical transmembrane segment at 246 to 266 threads the bilayer; sequence TMFYNNLLTIPVLFVCSFVFE. N-linked (GlcNAc...) asparagine glycosylation is found at Asn267 and Asn272. Topologically, residues 267-284 are lumenal; sequence NWSSENLTKNFPLETRNN. Residues 285-305 traverse the membrane as a helical segment; that stretch reads LILGMIYSGLATIFISYCSAW. Residues 306–313 lie on the Cytoplasmic side of the membrane; that stretch reads CIRVTSST. Residues 314–336 form a helical membrane-spanning segment; it reads TYSMVGALNKLPIAVSGLVFFAA. At 337-339 the chain is on the lumenal side; sequence PVT. Residues 340-359 traverse the membrane as a helical segment; that stretch reads FGSVSAIFIGFVSGIVYAWA. At 360–391 the chain is on the cytoplasmic side; it reads KVRQNQSKGSVLPTTQPVMSASSQSNRDAAKA. Residues 369-391 form a disordered region; it reads SVLPTTQPVMSASSQSNRDAAKA.

This sequence belongs to the TPT transporter family. SLC35D subfamily. Homooligomer.

The protein localises to the golgi apparatus membrane. It localises to the cytoplasmic vesicle membrane. Its subcellular location is the endoplasmic reticulum membrane. In terms of biological role, involved in the import of GDP-mannose from the cytoplasm into the Golgi lumen. The polypeptide is GDP-mannose transporter (vrg4) (Sclerotinia sclerotiorum (strain ATCC 18683 / 1980 / Ss-1) (White mold)).